We begin with the raw amino-acid sequence, 23 residues long: Maculatin-1.2 (23 aa).

A23 carries the alanine amide modification.

In terms of tissue distribution, expressed by the skin dorsal glands.

It is found in the secreted. Shows antibacterial activity against S.aureus and S.uberis. In Ranoidea genimaculata (Brown-spotted tree frog), this protein is Maculatin-1.2.